The following is a 56-amino-acid chain: Ribosome modulation factor (56 aa).

Belongs to the ribosome modulation factor family.

It localises to the cytoplasm. In terms of biological role, during stationary phase, converts 70S ribosomes to an inactive dimeric form (100S ribosomes). This chain is Ribosome modulation factor, found in Serratia proteamaculans (strain 568).